Reading from the N-terminus, the 162-residue chain is V-type proton ATPase subunit c' (162 aa).

At 1–11 (MSSNLCPIYSS) the chain is on the lumenal side. A helical membrane pass occupies residues 12 to 32 (FFGFAGVCASMVFSCLGAGYG). Topologically, residues 33–54 (TALAGRGIAAVGAFRPEIVMKS) are cytoplasmic. Residues 55–75 (LIPVVMSGIIGVYGLVMSVLI) form a helical membrane-spanning segment. The Lumenal portion of the chain corresponds to 76–93 (AGDMSPDNDYSLFSGFIH). A helical membrane pass occupies residues 94–114 (LSAGLAVGLTGVAAGYAIGVV). Topologically, residues 115–132 (GDRGVQSFMRQDRIFVSM) are cytoplasmic. Residues 133–153 (VLILIFAEVLGLYGLIVGLIL) traverse the membrane as a helical segment. Residues 154–162 (QTKTSNVCY) lie on the Lumenal side of the membrane.

The protein belongs to the V-ATPase proteolipid subunit family. In terms of assembly, V-ATPase is a heteromultimeric enzyme composed of a peripheral catalytic V1 complex (components A to H) attached to an integral membrane V0 proton pore complex (components: a, c, c', c'', d, e, f and VOA1). The decameric c-ring forms the proton-conducting pore, and is composed of eight proteolipid subunits c, one subunit c' and one subunit c''.

The protein resides in the vacuole membrane. Functionally, proton-conducting pore forming subunit of the V0 complex of vacuolar(H+)-ATPase (V-ATPase), a multisubunit enzyme composed of a peripheral complex (V1) that hydrolyzes ATP and a membrane integral complex (V0) that translocates protons. V-ATPase is responsible for acidifying and maintaining the pH of intracellular compartments. In Schizosaccharomyces pombe (strain 972 / ATCC 24843) (Fission yeast), this protein is V-type proton ATPase subunit c'.